Here is a 165-residue protein sequence, read N- to C-terminus: 6,7-dimethyl-8-ribityllumazine synthase (165 aa).

5-amino-6-(D-ribitylamino)uracil is bound by residues tryptophan 26, 58–60, and 80–82; these read SIE and VVI. A (2S)-2-hydroxy-3-oxobutyl phosphate-binding site is contributed by 85 to 86; it reads GT. The active-site Proton donor is histidine 88. Residue asparagine 113 participates in 5-amino-6-(D-ribitylamino)uracil binding. (2S)-2-hydroxy-3-oxobutyl phosphate is bound at residue arginine 127.

The protein belongs to the DMRL synthase family.

It carries out the reaction (2S)-2-hydroxy-3-oxobutyl phosphate + 5-amino-6-(D-ribitylamino)uracil = 6,7-dimethyl-8-(1-D-ribityl)lumazine + phosphate + 2 H2O + H(+). The protein operates within cofactor biosynthesis; riboflavin biosynthesis; riboflavin from 2-hydroxy-3-oxobutyl phosphate and 5-amino-6-(D-ribitylamino)uracil: step 1/2. Functionally, catalyzes the formation of 6,7-dimethyl-8-ribityllumazine by condensation of 5-amino-6-(D-ribitylamino)uracil with 3,4-dihydroxy-2-butanone 4-phosphate. This is the penultimate step in the biosynthesis of riboflavin. The sequence is that of 6,7-dimethyl-8-ribityllumazine synthase from Saccharopolyspora erythraea (strain ATCC 11635 / DSM 40517 / JCM 4748 / NBRC 13426 / NCIMB 8594 / NRRL 2338).